The following is a 495-amino-acid chain: Catalase B (495 aa).

Positions methionine 1–glycine 25 are disordered. Catalysis depends on residues histidine 55 and asparagine 128. Residue tyrosine 338 participates in heme binding.

The protein belongs to the catalase family. In terms of assembly, homodimer. Requires heme as cofactor.

It carries out the reaction 2 H2O2 = O2 + 2 H2O. Its function is as follows. Decomposes hydrogen peroxide into water and oxygen; serves to protect cells from the toxic effects of hydrogen peroxide. The chain is Catalase B (katB) from Staphylococcus xylosus.